The sequence spans 549 residues: Rhodopsin kinase grk7a (549 aa).

A Phosphoserine modification is found at serine 33. The 119-residue stretch at 53 to 171 folds into the RGS domain; it reads FESLCEKQPI…QASPFFDKFL (119 aa). A Protein kinase domain is found at 186–449; the sequence is FYEFRTLGKG…NDDPRKHEWF (264 aa). ATP is bound by residues 192 to 200 and lysine 215; that span reads LGKGGFGEV. Aspartate 311 acts as the Proton acceptor in catalysis. The AGC-kinase C-terminal domain occupies 450–515; sequence KSINFARLEA…GAVSIAWQQE (66 aa). Residues 522 to 549 form a disordered region; the sequence is FDELSDPNRKESSGGSDDDKKSGTCTLL. The span at 527–543 shows a compositional bias: basic and acidic residues; that stretch reads DPNRKESSGGSDDDKKS. Cysteine 546 is subject to Cysteine methyl ester. Cysteine 546 carries S-geranylgeranyl cysteine lipidation. Positions 547 to 549 are cleaved as a propeptide — removed in mature form; that stretch reads TLL.

The protein belongs to the protein kinase superfamily. AGC Ser/Thr protein kinase family. GPRK subfamily. In terms of processing, phosphorylation at Ser-33 is regulated by light and activated by cAMP.

Its subcellular location is the membrane. The catalysed reaction is L-threonyl-[rhodopsin] + ATP = O-phospho-L-threonyl-[rhodopsin] + ADP + H(+). It catalyses the reaction L-seryl-[rhodopsin] + ATP = O-phospho-L-seryl-[rhodopsin] + ADP + H(+). Functionally, retina-specific kinase involved in the shutoff of the photoresponse and adaptation to changing light conditions via cone opsin phosphorylation, including rhodopsin (RHO). The sequence is that of Rhodopsin kinase grk7a (grk7a) from Danio rerio (Zebrafish).